The following is a 306-amino-acid chain: Ribonuclease Z (306 aa).

7 residues coordinate Zn(2+): His63, His65, Asp67, His68, His141, Asp211, and His269. Asp67 serves as the catalytic Proton acceptor.

It belongs to the RNase Z family. In terms of assembly, homodimer. It depends on Zn(2+) as a cofactor.

It carries out the reaction Endonucleolytic cleavage of RNA, removing extra 3' nucleotides from tRNA precursor, generating 3' termini of tRNAs. A 3'-hydroxy group is left at the tRNA terminus and a 5'-phosphoryl group is left at the trailer molecule.. Its function is as follows. Zinc phosphodiesterase, which displays some tRNA 3'-processing endonuclease activity. Probably involved in tRNA maturation, by removing a 3'-trailer from precursor tRNA. This chain is Ribonuclease Z, found in Staphylococcus carnosus (strain TM300).